Here is a 295-residue protein sequence, read N- to C-terminus: Fructose-bisphosphate aldolase class 1 (295 aa).

E176 serves as the catalytic Proton acceptor. K213 acts as the Schiff-base intermediate with dihydroxyacetone-P in catalysis.

It belongs to the class I fructose-bisphosphate aldolase family.

The enzyme catalyses beta-D-fructose 1,6-bisphosphate = D-glyceraldehyde 3-phosphate + dihydroxyacetone phosphate. The protein operates within carbohydrate degradation; glycolysis; D-glyceraldehyde 3-phosphate and glycerone phosphate from D-glucose: step 4/4. The sequence is that of Fructose-bisphosphate aldolase class 1 from Fusobacterium nucleatum subsp. nucleatum (strain ATCC 25586 / DSM 15643 / BCRC 10681 / CIP 101130 / JCM 8532 / KCTC 2640 / LMG 13131 / VPI 4355).